A 779-amino-acid chain; its full sequence is Mesenchyme-specific cell surface glycoprotein (779 aa).

Positions 1 to 15 (MQFGVPLLVLCLALG) are cleaved as a signal peptide. Asn-203 and Asn-234 each carry an N-linked (GlcNAc...) asparagine glycan. The interval 249–363 (AGFPRGTTWS…QYPMIPTTPL (115 aa)) is disordered. Positions 262 to 351 (GAGGQGGQGQ…GGQGGQGGGN (90 aa)) are enriched in gly residues. Residues Asn-369, Asn-451, and Asn-609 are each glycosylated (N-linked (GlcNAc...) asparagine).

In terms of tissue distribution, restricted to the primary mesenchyme cell lineage.

It localises to the cell membrane. Its function is as follows. Not known. Could be involved in mesenchyme cell migration, adhesion, fusion, or spicule formation. This is Mesenchyme-specific cell surface glycoprotein from Strongylocentrotus purpuratus (Purple sea urchin).